The primary structure comprises 360 residues: MSQSAVSFQISPVSKTQDPLIQQKIDLKTKPPGALGQLESLALQIARVQATDSQQTDQPQNTVLKIVQPTMLVFAGDHGIAAEGVSIAPSEVTRQMVQNFAHGGAAINVFCRQVGFTLEVIDCGILTPVEGVEGIIDQRLGAGTGAIHLEPAMALETVDKGFAMARDLIERHHQAGCNLVAFGEMGIGNTSAAAAIMAAIMQLDVIDCVGRGTGINSETLERKLMLIELALLLHQSALTGPKSVLACLGGFEIVQMTGAMLAAAERKMLVVVDGFIATAAALVAVQIAPNVRDYLIFAHQSDEQGHKRMLEFLQAKPLLSLGLRLGEGTGAALALPLIQASVNFYNQMASFSDAGIEAVV.

Residue Glu327 is the Proton acceptor of the active site.

This sequence belongs to the CobT family.

It carries out the reaction 5,6-dimethylbenzimidazole + nicotinate beta-D-ribonucleotide = alpha-ribazole 5'-phosphate + nicotinate + H(+). Its pathway is nucleoside biosynthesis; alpha-ribazole biosynthesis; alpha-ribazole from 5,6-dimethylbenzimidazole: step 1/2. In terms of biological role, catalyzes the synthesis of alpha-ribazole-5'-phosphate from nicotinate mononucleotide (NAMN) and 5,6-dimethylbenzimidazole (DMB). In Shewanella baltica (strain OS155 / ATCC BAA-1091), this protein is Nicotinate-nucleotide--dimethylbenzimidazole phosphoribosyltransferase.